The chain runs to 240 residues: 4-hydroxy-tetrahydrodipicolinate reductase (240 aa).

NAD(+) is bound by residues 79–81 (ATT) and 103–106 (SANM). Catalysis depends on His-135, which acts as the Proton donor/acceptor. His-136 contacts (S)-2,3,4,5-tetrahydrodipicolinate. Lys-139 acts as the Proton donor in catalysis. Residue 145–146 (GT) participates in (S)-2,3,4,5-tetrahydrodipicolinate binding.

Belongs to the DapB family.

The protein localises to the cytoplasm. It carries out the reaction (S)-2,3,4,5-tetrahydrodipicolinate + NAD(+) + H2O = (2S,4S)-4-hydroxy-2,3,4,5-tetrahydrodipicolinate + NADH + H(+). The catalysed reaction is (S)-2,3,4,5-tetrahydrodipicolinate + NADP(+) + H2O = (2S,4S)-4-hydroxy-2,3,4,5-tetrahydrodipicolinate + NADPH + H(+). It participates in amino-acid biosynthesis; L-lysine biosynthesis via DAP pathway; (S)-tetrahydrodipicolinate from L-aspartate: step 4/4. In terms of biological role, catalyzes the conversion of 4-hydroxy-tetrahydrodipicolinate (HTPA) to tetrahydrodipicolinate. In Staphylococcus aureus (strain bovine RF122 / ET3-1), this protein is 4-hydroxy-tetrahydrodipicolinate reductase.